Consider the following 115-residue polypeptide: NADH-ubiquinone oxidoreductase chain 3 (115 aa).

Transmembrane regions (helical) follow at residues 4-24, 55-75, and 87-107; these read LITM…AFWL, FFLV…LLPL, and TMMV…YEWL.

Belongs to the complex I subunit 3 family. Core subunit of respiratory chain NADH dehydrogenase (Complex I) which is composed of 45 different subunits. Interacts with TMEM186. Interacts with TMEM242.

The protein resides in the mitochondrion inner membrane. It catalyses the reaction a ubiquinone + NADH + 5 H(+)(in) = a ubiquinol + NAD(+) + 4 H(+)(out). In terms of biological role, core subunit of the mitochondrial membrane respiratory chain NADH dehydrogenase (Complex I) which catalyzes electron transfer from NADH through the respiratory chain, using ubiquinone as an electron acceptor. Essential for the catalytic activity of complex I. This Notiomys edwardsii (Edwards's long-clawed mouse) protein is NADH-ubiquinone oxidoreductase chain 3.